A 378-amino-acid chain; its full sequence is Trans-enoyl reductase poxP (378 aa).

62-65 (CDWK) is an NADP(+) binding site. 151-158 (SVFATLWI) is a binding site for substrate. NADP(+) contacts are provided by residues 187 to 190 (STST), 210 to 213 (SPHN), tyrosine 228, and 275 to 276 (LE). A substrate-binding site is contributed by 295–299 (GLAAS). 364-365 (TS) serves as a coordination point for NADP(+).

The protein belongs to the zinc-containing alcohol dehydrogenase family. Monomer.

Its pathway is secondary metabolite biosynthesis. Functionally, trans-enoyl reductase; part of the gene cluster that mediates the biosynthesis of oxaleimides, cytotoxic compounds containing an unusual disubstituted succinimide moiety. The first step of the pathway is provided by the HR-PKS poxF that serves in a new mode of collaborative biosynthesis with the PKS-NRPS poxE, by providing the olefin containing amino acid substrate via the synthesis of an ACP-bound dec-4-enoate. The cytochrome P450 monooxygenase poxM-catalyzed oxidation at the alpha-position creates the enzyme-bound 2-hydroxydec-4-enoyl-ACP thioester, which may be prone to spontaneous hydrolysis to yield 2-hydroxydec-4-enoic acid due to increased electrophilicity of the carbonyl. 2-hydroxydec-4-enoic acid can then be further oxidized by poxM to yield the alpha-ketoacid 2-oxodec-4-enoicacid, which is reductively aminated by the aminotransferase poxL to yield (S,E)-2-aminodec-4-enoic acid. The Hybrid PKS-NRPS synthetase poxE then performs condensation between the octaketide product of its PKS modules and the amino group of (S,E)-2-aminodec-4-enoic acid which is activated and incorporated by the adenylation domain. The resulting aminoacyl product can be cyclized by the Diels-Alderase PoxQ and reductively released by the reductive (R) domain of poxE to yield an aldehyde intermediate. The released aldehyde is then substrate for a Knoevenagel condensation by the hydrolyase poxO followed by an oxidation at the 5-position of the pyrrolidone ring. The presence of the olefin from the amino acid building block allows for migration of the substituted allyl group to occur. This allylic transposition reaction takes place in a conjugate addition, semipinacol-like fashion to yield a succinimide intermediate. Iterative two-electron oxidations of the C7 methyl of the succinimide intermediate to the carboxylic acid can be catalyzed by one of two remaining cytochrome P450 monooxygenasess poxC or poxD to yield oxaleimide A. Subsequent oxidation yields the maleimide scaffold oxaleimide I. Both oxaleimide A and oxaleimide I can undergo oxidative modifications in the decalin ring to yield the series of products oxaleimides B to H. In Penicillium oxalicum, this protein is Trans-enoyl reductase poxP.